Here is a 215-residue protein sequence, read N- to C-terminus: ATP-dependent dethiobiotin synthetase BioD (215 aa).

13–18 (DIGKTV) contacts ATP. Thr17 contacts Mg(2+). Lys38 is a catalytic residue. Position 42 (Thr42) interacts with substrate. Residues Asp50, 115-118 (EGAG), and 175-176 (NH) each bind ATP. Asp50 and Glu115 together coordinate Mg(2+).

This sequence belongs to the dethiobiotin synthetase family. Homodimer. Mg(2+) is required as a cofactor.

It is found in the cytoplasm. It carries out the reaction (7R,8S)-7,8-diammoniononanoate + CO2 + ATP = (4R,5S)-dethiobiotin + ADP + phosphate + 3 H(+). Its pathway is cofactor biosynthesis; biotin biosynthesis; biotin from 7,8-diaminononanoate: step 1/2. Functionally, catalyzes a mechanistically unusual reaction, the ATP-dependent insertion of CO2 between the N7 and N8 nitrogen atoms of 7,8-diaminopelargonic acid (DAPA, also called 7,8-diammoniononanoate) to form a ureido ring. The chain is ATP-dependent dethiobiotin synthetase BioD from Neisseria gonorrhoeae (strain NCCP11945).